Reading from the N-terminus, the 424-residue chain is Deoxyguanosinetriphosphate triphosphohydrolase-like protein (424 aa).

Residues 1–24 (MYPYSDADAFRRHPERAKSSQLRT) are disordered. The span at 8–18 (DAFRRHPERAK) shows a compositional bias: basic and acidic residues. Positions 67 to 217 (RLTHSLEVAQ…MDFSDDIAYS (151 aa)) constitute an HD domain.

The protein belongs to the dGTPase family. Type 2 subfamily.

This Corynebacterium glutamicum (strain R) protein is Deoxyguanosinetriphosphate triphosphohydrolase-like protein.